Reading from the N-terminus, the 157-residue chain is Glycine-rich RNA-binding protein (157 aa).

Residues 6 to 84 (YRCFVGGLAW…RNITVNEAQS (79 aa)) form the RRM domain. A disordered region spans residues 70 to 157 (QELDGRNITV…YGGGGGGSRW (88 aa)). Gly residues-rich tracts occupy residues 86-138 (GSGG…GGYG) and 145-157 (DGGY…GSRW).

May play a role in the biosynthesis and processing of heterogeneous nuclear RNA and in the maturation of specific mRNAs in response to wounding. This chain is Glycine-rich RNA-binding protein, found in Daucus carota (Wild carrot).